Reading from the N-terminus, the 382-residue chain is Cytochrome c biogenesis CcmF N-terminal-like mitochondrial protein 1 (382 aa).

Transmembrane regions (helical) follow at residues 1 to 21 (MSIS…FVAF), 30 to 50 (AFGA…LLFC), 79 to 99 (HEGS…FFCY), and 117 to 137 (SLFF…LLRY).

The protein belongs to the CcmF/CycK/Ccl1/NrfE/CcsA family. Interacts with CCMFN2 and CCMH.

The protein localises to the mitochondrion inner membrane. Functionally, forms a complex with CCMFC, CCMFN2 and CCMH that performs the assembly of heme with c-type apocytochromes in mitochondria. The protein is Cytochrome c biogenesis CcmF N-terminal-like mitochondrial protein 1 of Arabidopsis thaliana (Mouse-ear cress).